The following is a 513-amino-acid chain: ATP synthase subunit alpha 2 (513 aa).

Residue 169 to 176 (GDRQTGKT) coordinates ATP.

It belongs to the ATPase alpha/beta chains family. F-type ATPases have 2 components, CF(1) - the catalytic core - and CF(0) - the membrane proton channel. CF(1) has five subunits: alpha(3), beta(3), gamma(1), delta(1), epsilon(1). CF(0) has three main subunits: a(1), b(2) and c(9-12). The alpha and beta chains form an alternating ring which encloses part of the gamma chain. CF(1) is attached to CF(0) by a central stalk formed by the gamma and epsilon chains, while a peripheral stalk is formed by the delta and b chains.

Its subcellular location is the cell inner membrane. The enzyme catalyses ATP + H2O + 4 H(+)(in) = ADP + phosphate + 5 H(+)(out). Its function is as follows. Produces ATP from ADP in the presence of a proton gradient across the membrane. The alpha chain is a regulatory subunit. The protein is ATP synthase subunit alpha 2 of Photobacterium profundum (strain SS9).